We begin with the raw amino-acid sequence, 265 residues long: MSAHQARKRFGQHFLTDESVVESIVRAIGPARDDRVVEIGPGLSALTRPLLDRIDHLTAVEIDRDLAARLRRQYPAERLTVVEADALTVDFAQFGQGLRVVGNLPYNISSPLLFHLMGAAEQVRDQHFMLQREVIDRMVAEPGSGDYSRLSVMLQARYRMEKLFDVAPEAFDPPPRVVSAVVRMAPLPADRLRPASDAAFETVVARAFSQRRKMLRRVLDDWAALTPWDELGIAPTARAEEVGVAQFIGLADALLAAGAPGLARP.

Positions 13, 15, 40, 61, 85, and 103 each coordinate S-adenosyl-L-methionine.

It belongs to the class I-like SAM-binding methyltransferase superfamily. rRNA adenine N(6)-methyltransferase family. RsmA subfamily.

Its subcellular location is the cytoplasm. It carries out the reaction adenosine(1518)/adenosine(1519) in 16S rRNA + 4 S-adenosyl-L-methionine = N(6)-dimethyladenosine(1518)/N(6)-dimethyladenosine(1519) in 16S rRNA + 4 S-adenosyl-L-homocysteine + 4 H(+). Specifically dimethylates two adjacent adenosines (A1518 and A1519) in the loop of a conserved hairpin near the 3'-end of 16S rRNA in the 30S particle. May play a critical role in biogenesis of 30S subunits. The protein is Ribosomal RNA small subunit methyltransferase A of Bordetella pertussis (strain Tohama I / ATCC BAA-589 / NCTC 13251).